The chain runs to 420 residues: Multiple sugar-binding protein (420 aa).

The signal sequence occupies residues Met-1–Ala-22. Cys-23 carries the N-palmitoyl cysteine lipid modification. Cys-23 is lipidated: S-diacylglycerol cysteine.

It belongs to the bacterial solute-binding protein 1 family.

It is found in the cell membrane. In terms of biological role, involved in a binding protein-dependent transport system responsible for the uptake of melibiose, raffinose and isomaltotriose. The protein is Multiple sugar-binding protein of Streptococcus mutans serotype c (strain ATCC 700610 / UA159).